The sequence spans 86 residues: Anti-adapter protein IraP (86 aa).

Residues 1–38 (MKNLIAELLVKLAQKEEEAKELTVQVEALEIVVTALLR) are a coiled coil.

Belongs to the IraP family. In terms of assembly, interacts with RssB.

The protein resides in the cytoplasm. In terms of biological role, inhibits RpoS proteolysis by regulating RssB activity, thereby increasing the stability of the sigma stress factor RpoS especially during phosphate starvation, but also in stationary phase and during nitrogen starvation. Its effect on RpoS stability is due to its interaction with RssB, which probably blocks the interaction of RssB with RpoS, and the consequent delivery of the RssB-RpoS complex to the ClpXP protein degradation pathway. This is Anti-adapter protein IraP from Klebsiella pneumoniae (strain 342).